The following is a 198-amino-acid chain: Probable chorismate pyruvate-lyase (198 aa).

Residues arginine 73, leucine 111, and glutamate 172 each contribute to the substrate site.

The protein belongs to the UbiC family.

The protein resides in the cytoplasm. The enzyme catalyses chorismate = 4-hydroxybenzoate + pyruvate. The protein operates within cofactor biosynthesis; ubiquinone biosynthesis. In terms of biological role, removes the pyruvyl group from chorismate, with concomitant aromatization of the ring, to provide 4-hydroxybenzoate (4HB) for the ubiquinone pathway. The polypeptide is Probable chorismate pyruvate-lyase (Burkholderia lata (strain ATCC 17760 / DSM 23089 / LMG 22485 / NCIMB 9086 / R18194 / 383)).